The chain runs to 40 residues: uncharacterized protein (40 aa).

The chain crosses the membrane as a helical span at residues 20-37; that stretch reads TYLYWTAVTAAYLTYLTI.

The protein localises to the membrane. This is an uncharacterized protein from Archaeoglobus fulgidus (strain ATCC 49558 / DSM 4304 / JCM 9628 / NBRC 100126 / VC-16).